The primary structure comprises 138 residues: U1 small nuclear ribonucleoprotein C (138 aa).

A Matrin-type zinc finger spans residues 4 to 36 (YYCDYCDTFLTHDSPSVRKTHNNGRKHKENVRF). Positions 58 to 138 (QSKPNSQMPP…MGRPPMSLRS (81 aa)) are disordered. The span at 67-109 (PNAPPGLMPPPGMLPPPGGMPPGRMPPQGLPFPPPGPIPPPPG) shows a compositional bias: pro residues. Positions 113–138 (MRPPHGQMHMGGPRPQMGRPPMSLRS) are enriched in low complexity.

It belongs to the U1 small nuclear ribonucleoprotein C family. As to quaternary structure, U1 snRNP is composed of the 7 core Sm proteins B/B', D1, D2, D3, E, F and G that assemble in a heptameric protein ring on the Sm site of the small nuclear RNA to form the core snRNP, and at least 3 U1 snRNP-specific proteins U1-70K, U1-A and U1-C. U1-C interacts with U1 snRNA and the 5' splice-site region of the pre-mRNA.

The protein resides in the nucleus. Component of the spliceosomal U1 snRNP, which is essential for recognition of the pre-mRNA 5' splice-site and the subsequent assembly of the spliceosome. U1-C is directly involved in initial 5' splice-site recognition for both constitutive and regulated alternative splicing. The interaction with the 5' splice-site seems to precede base-pairing between the pre-mRNA and the U1 snRNA. Stimulates commitment or early (E) complex formation by stabilizing the base pairing of the 5' end of the U1 snRNA and the 5' splice-site region. The polypeptide is U1 small nuclear ribonucleoprotein C (Nematostella vectensis (Starlet sea anemone)).